A 240-amino-acid chain; its full sequence is uncharacterized protein (240 aa).

At 1 to 85 the chain is on the cytoplasmic side; sequence MSGFIKSTLL…LCGCCCWTNT (85 aa). Residues 86 to 106 traverse the membrane as a helical segment; the sequence is IGWAPLLALLPVIGPLLMYWV. The Extracellular segment spans residues 107–131; sequence HDKLIELADDRYKLPAEIKVKMHGN. A helical membrane pass occupies residues 132-152; that stretch reads IVIDLLISLVPILGSVFAWLH. The Cytoplasmic segment spans residues 153 to 240; sequence ACSTRNAAIV…TNGRPQRGYR (88 aa). The disordered stretch occupies residues 181–240; sequence QKEENEKHSNANTAPPVVGGNKNVNGNRNNSKMYNRPPVTAPPAPAYTRSTNGRPQRGYR. Positions 197–210 are enriched in low complexity; sequence VVGGNKNVNGNRNN.

It is found in the membrane. This is an uncharacterized protein from Saccharomyces cerevisiae (strain ATCC 204508 / S288c) (Baker's yeast).